The following is a 55-amino-acid chain: MCCGPCGSCCGYYCCGPCCGPCGPRCGPCGSCCGPCGPCGPCCGPFGSCCGGCWC.

This sequence belongs to the MST(3)CGP family. As to expression, testis.

The protein is Male-specific sperm protein Mst84Dc (Mst84Dc) of Drosophila melanogaster (Fruit fly).